We begin with the raw amino-acid sequence, 182 residues long: uncharacterized protein (182 aa).

The Macro domain occupies 1–177; it reads MEFSVGGVEV…KFLEVFKKHL (177 aa).

This is an uncharacterized protein from Pyrobaculum aerophilum (strain ATCC 51768 / DSM 7523 / JCM 9630 / CIP 104966 / NBRC 100827 / IM2).